Here is a 401-residue protein sequence, read N- to C-terminus: Exodeoxyribonuclease 7 large subunit (401 aa).

This sequence belongs to the XseA family. As to quaternary structure, heterooligomer composed of large and small subunits.

Its subcellular location is the cytoplasm. It catalyses the reaction Exonucleolytic cleavage in either 5'- to 3'- or 3'- to 5'-direction to yield nucleoside 5'-phosphates.. Bidirectionally degrades single-stranded DNA into large acid-insoluble oligonucleotides, which are then degraded further into small acid-soluble oligonucleotides. The sequence is that of Exodeoxyribonuclease 7 large subunit from Thermoanaerobacter pseudethanolicus (strain ATCC 33223 / 39E) (Clostridium thermohydrosulfuricum).